A 454-amino-acid polypeptide reads, in one-letter code: Nuclear distribution protein PAC1-1 (454 aa).

In terms of domain architecture, LisH spans 9–41; the sequence is QAEELHRALIAYLSSNNLTSTAAALRAEIGLGE. Residues 71–93 are disordered; it reads RHTSQLSNATPTSRQNKDPVNWL. The segment covering 73–84 has biased composition (polar residues); it reads TSQLSNATPTSR. WD repeat units lie at residues 104 to 145, 147 to 187, 191 to 236, 239 to 278, 283 to 342, 344 to 383, and 388 to 450; these read SHRQ…RTIK, HTKT…KNIR, GHDH…CVKT, GHAE…PEPK, GHEH…IKIL, GHDN…RCVK, and AHAH…LNVR.

This sequence belongs to the WD repeat LIS1/nudF family. Self-associates. Interacts with NDL1 and dynein.

It is found in the cytoplasm. The protein localises to the cytoskeleton. It localises to the spindle pole. In terms of biological role, positively regulates the activity of the minus-end directed microtubule motor protein dynein. May enhance dynein-mediated microtubule sliding by targeting dynein to the microtubule plus end. Required for nuclear migration during vegetative growth as well as development. Required for retrograde early endosome (EE) transport from the hyphal tip. Required for localization of dynein to the mitotic spindle poles. Recruits additional proteins to the dynein complex at SPBs. In Chaetomium globosum (strain ATCC 6205 / CBS 148.51 / DSM 1962 / NBRC 6347 / NRRL 1970) (Soil fungus), this protein is Nuclear distribution protein PAC1-1.